A 224-amino-acid chain; its full sequence is Small ribosomal subunit protein uS3 (224 aa).

The 69-residue stretch at 38-106 (LREYVKEKLG…EVYLNVVEVR (69 aa)) folds into the KH type-2 domain.

It belongs to the universal ribosomal protein uS3 family. In terms of assembly, part of the 30S ribosomal subunit. Forms a tight complex with proteins S10 and S14.

Its function is as follows. Binds the lower part of the 30S subunit head. Binds mRNA in the 70S ribosome, positioning it for translation. This is Small ribosomal subunit protein uS3 from Anaeromyxobacter sp. (strain Fw109-5).